We begin with the raw amino-acid sequence, 664 residues long: E3 ubiquitin-protein ligase CHFR (664 aa).

Residues 38-89 (WTIGRRRGCDLSFPSNKLVSGDHCKLTVDEISGEVTLEDTSTNGTVINKLQV) form the FHA domain. 2 disordered regions span residues 170 to 220 (LEEP…GRSS) and 245 to 264 (ESKD…GDGE). A compositionally biased stretch (polar residues) spans 174 to 202 (QPSTSTSDLLPTASTSSTEPELTSAGQKH). Residues 203–215 (SSSSGPGNTSISP) are compositionally biased toward low complexity. The segment covering 245–263 (ESKDHEELEPAKKKMKGDG) has biased composition (basic and acidic residues). The RING-type zinc finger occupies 303–342 (CIICQDLLHDCVSLQPCMHTFCAACYSGWMERSSLCPTCR). Threonine 385 bears the Phosphothreonine mark. The segment at 389-413 (LQPKVRRSFSDEEGSSEDLLELSDV) is disordered. A compositionally biased stretch (acidic residues) spans 399 to 413 (DEEGSSEDLLELSDV). The PBZ-type zinc finger occupies 633-655 (PDCYWGRNCRTQVKAHHAMKFNH).

Belongs to the CHFR family. Interacts with HDAC1 and HDAC2. Interacts with PML (with sumoylated form of PML). Poly-ADP-ribosylated. In addition to binding non covalently poly(ADP-ribose) via its PBZ-type zinc finger, the protein is also covalently poly-ADP-ribosylated by PARP1. Post-translationally, autoubiquitinated; may regulate its cellular level. In terms of processing, phosphorylated by PKB. Phosphorylation may affect its E3 ligase activity.

The protein resides in the nucleus. Its subcellular location is the PML body. It carries out the reaction S-ubiquitinyl-[E2 ubiquitin-conjugating enzyme]-L-cysteine + [acceptor protein]-L-lysine = [E2 ubiquitin-conjugating enzyme]-L-cysteine + N(6)-ubiquitinyl-[acceptor protein]-L-lysine.. Its pathway is protein modification; protein ubiquitination. Functionally, E3 ubiquitin-protein ligase that functions in the antephase checkpoint by actively delaying passage into mitosis in response to microtubule poisons. Acts in early prophase before chromosome condensation, when the centrosome move apart from each other along the periphery of the nucleus. Probably involved in signaling the presence of mitotic stress caused by microtubule poisons by mediating the 'Lys-48'-linked ubiquitination of target proteins, leading to their degradation by the proteasome. Promotes the ubiquitination and subsequent degradation of AURKA and PLK1. Probably acts as a tumor suppressor, possibly by mediating the polyubiquitination of HDAC1, leading to its degradation. May also promote the formation of 'Lys-63'-linked polyubiquitin chains and functions with the specific ubiquitin-conjugating UBC13-MMS2 (UBE2N-UBE2V2) heterodimer. Substrates that are polyubiquitinated at 'Lys-63' are usually not targeted for degradation, but are rather involved in signaling cellular stress. The sequence is that of E3 ubiquitin-protein ligase CHFR (Chfr) from Mus musculus (Mouse).